The sequence spans 431 residues: Adenylosuccinate lyase (431 aa).

Residues 4-5, 67-69, and 93-94 each bind N(6)-(1,2-dicarboxyethyl)-AMP; these read RY, RHD, and TS. The active-site Proton donor/acceptor is the histidine 141. N(6)-(1,2-dicarboxyethyl)-AMP is bound at residue glutamine 212. Residue serine 262 is the Proton donor/acceptor of the active site. N(6)-(1,2-dicarboxyethyl)-AMP-binding positions include serine 263, 268 to 270, asparagine 276, and 307 to 311; these read KRN and SAERI.

It belongs to the lyase 1 family. Adenylosuccinate lyase subfamily. In terms of assembly, homodimer and homotetramer. Residues from neighboring subunits contribute catalytic and substrate-binding residues to each active site.

The enzyme catalyses N(6)-(1,2-dicarboxyethyl)-AMP = fumarate + AMP. It carries out the reaction (2S)-2-[5-amino-1-(5-phospho-beta-D-ribosyl)imidazole-4-carboxamido]succinate = 5-amino-1-(5-phospho-beta-D-ribosyl)imidazole-4-carboxamide + fumarate. The protein operates within purine metabolism; AMP biosynthesis via de novo pathway; AMP from IMP: step 2/2. Its pathway is purine metabolism; IMP biosynthesis via de novo pathway; 5-amino-1-(5-phospho-D-ribosyl)imidazole-4-carboxamide from 5-amino-1-(5-phospho-D-ribosyl)imidazole-4-carboxylate: step 2/2. In terms of biological role, catalyzes two reactions in de novo purine nucleotide biosynthesis. Catalyzes the breakdown of 5-aminoimidazole- (N-succinylocarboxamide) ribotide (SAICAR or 2-[5-amino-1-(5-phospho-beta-D-ribosyl)imidazole-4-carboxamido]succinate) to 5-aminoimidazole-4-carboxamide ribotide (AICAR or 5-amino-1-(5-phospho-beta-D-ribosyl)imidazole-4-carboxamide) and fumarate, and of adenylosuccinate (ADS or N(6)-(1,2-dicarboxyethyl)-AMP) to adenosine monophosphate (AMP) and fumarate. The chain is Adenylosuccinate lyase (purB) from Staphylococcus haemolyticus (strain JCSC1435).